The primary structure comprises 383 residues: D-alanine--D-alanine ligase (383 aa).

Positions 169–373 constitute an ATP-grasp domain; the sequence is KALLRAAGLP…YPQLVDRLVR (205 aa). 196 to 251 is an ATP binding site; the sequence is QERLGLPVFVKPARGGSSIGISRVEAWADLDTAIKAARASDPKVLVESAIVGREIE. The Mg(2+) site is built by aspartate 327, glutamate 340, and asparagine 342.

The protein belongs to the D-alanine--D-alanine ligase family. The cofactor is Mg(2+). Requires Mn(2+) as cofactor.

It is found in the cytoplasm. It carries out the reaction 2 D-alanine + ATP = D-alanyl-D-alanine + ADP + phosphate + H(+). It functions in the pathway cell wall biogenesis; peptidoglycan biosynthesis. Cell wall formation. The sequence is that of D-alanine--D-alanine ligase from Frankia casuarinae (strain DSM 45818 / CECT 9043 / HFP020203 / CcI3).